We begin with the raw amino-acid sequence, 275 residues long: Autophagy protein 5 (275 aa).

Residue Met-1 is modified to N-acetylmethionine. Residue Lys-130 forms a Glycyl lysine isopeptide (Lys-Gly) (interchain with G-Cter in ATG12) linkage.

Belongs to the ATG5 family. Forms a conjugate with ATG12. Part of the minor complex composed of 4 sets of ATG12-ATG5 and ATG16L1 (400 kDa); this complex interacts with ATG3 leading to disruption of ATG7 interaction and promotion of ATG8-like proteins lipidation. Forms an 800-kDa complex composed of ATG12-ATG5 and ATG16L2. The ATG12-ATG5 conjugate interacts with RAB33A; this interaction is bridged by ATG16L1 and promotes ATG12-ATG5-ATG16L1 complex recruitment to phagophores. Interacts with TECPR1; the interaction is direct and does not take place when ATG16L1 is associated with the ATG5-ATG12 conjugate. Interacts with DHX58/RIG-1, IFIH1/MDA5 and MAVS/IPS-1 in monomeric form as well as in ATG12-ATG5 conjugate form. The interaction with MAVS is further enhanced upon vesicular stomatitis virus (VSV) infection. Interacts with ATG3. Interacts with ATG7 and ATG10. Interacts with FADD. Interacts with Bassoon/BSN; this interaction is important for the regulation of presynaptic autophagy. Interacts with ATG16L2. Conjugated to ATG12; which is essential for autophagy, but is not required for association with isolation membrane. Post-translationally, acetylated by EP300.

It localises to the cytoplasm. The protein localises to the preautophagosomal structure membrane. In terms of biological role, involved in autophagic vesicle formation. Conjugation with ATG12, through a ubiquitin-like conjugating system involving ATG7 as an E1-like activating enzyme and ATG10 as an E2-like conjugating enzyme, is essential for its function. The ATG12-ATG5 conjugate acts as an E3-like enzyme which is required for lipidation of ATG8 family proteins and their association to the vesicle membranes. Involved in mitochondrial quality control after oxidative damage, and in subsequent cellular longevity. Plays a critical role in multiple aspects of lymphocyte development and is essential for both B and T lymphocyte survival and proliferation. Required for optimal processing and presentation of antigens for MHC II. Involved in the maintenance of axon morphology and membrane structures, as well as in normal adipocyte differentiation. Promotes primary ciliogenesis through removal of OFD1 from centriolar satellites and degradation of IFT20 via the autophagic pathway. As part of the ATG8 conjugation system with ATG12 and ATG16L1, required for recruitment of LRRK2 to stressed lysosomes and induction of LRRK2 kinase activity in response to lysosomal stress. Its function is as follows. May play an important role in the apoptotic process, possibly within the modified cytoskeleton. Its expression is a relatively late event in the apoptotic process, occurring downstream of caspase activity. Plays a crucial role in IFN-gamma-induced autophagic cell death by interacting with FADD. The chain is Autophagy protein 5 from Sus scrofa (Pig).